A 413-amino-acid polypeptide reads, in one-letter code: Peptide chain release factor 1, mitochondrial (413 aa).

N5-methylglutamine is present on Gln287. A disordered region spans residues 335-363 (RLEKEEKERKARKSQVSSTNRSDKIRTYN).

Belongs to the prokaryotic/mitochondrial release factor family. In terms of processing, methylation of glutamine in the GGQ triplet is conserved from bacteria to mammals. N5-methylated on Gln-287 by MTQ1.

It is found in the mitochondrion. Its function is as follows. Mitochondrial peptide chain release factor that directs the termination of translation in response to the peptide chain termination codons UAA and UAG. The protein is Peptide chain release factor 1, mitochondrial (MRF1) of Saccharomyces cerevisiae (strain ATCC 204508 / S288c) (Baker's yeast).